We begin with the raw amino-acid sequence, 395 residues long: Acid ceramidase (395 aa).

The N-terminal stretch at 1–20 (MLGWSRLTFILLSGIVTCLV) is a signal peptide. Cysteines 31 and 340 form a disulfide. Catalysis depends on Cys-143, which acts as the Nucleophile. Asn-195, Asn-259, Asn-286, and Asn-342 each carry an N-linked (GlcNAc...) asparagine glycan. The cysteines at positions 388 and 392 are disulfide-linked.

Belongs to the acid ceramidase family. As to quaternary structure, heterodimer; disulfide-linked. The heterodimer is composed of the disulfide-linked alpha and beta chains produced by autocatalytic cleavage of the precursor. In terms of processing, N-glycosylated. Post-translationally, proteolytically cleaved into two chains alpha and beta that remain associated via a disulfide bond. Cleavage gives rise to a conformation change that activates the enzyme. The same catalytic Cys residue mediates the autoproteolytic cleavage and subsequent hydrolysis of lipid substrates. The beta chain may undergo an additional C-terminal processing.

The protein localises to the lysosome. It localises to the secreted. It catalyses the reaction an N-acylsphing-4-enine + H2O = sphing-4-enine + a fatty acid. The catalysed reaction is N-dodecanoylsphing-4-enine + H2O = dodecanoate + sphing-4-enine. The enzyme catalyses N-tetradecanoylsphing-4-enine + H2O = tetradecanoate + sphing-4-enine. It carries out the reaction N-hexadecanoylsphing-4-enine + H2O = sphing-4-enine + hexadecanoate. It catalyses the reaction N-octadecanoylsphing-4-enine + H2O = sphing-4-enine + octadecanoate. The catalysed reaction is N-dodecanoyl-(4R)-hydroxysphinganine + H2O = (4R)-hydroxysphinganine + dodecanoate. The enzyme catalyses N-(dodecanoyl)-sphinganine + H2O = dodecanoate + sphinganine. It carries out the reaction N-(acetyl)-sphing-4-enine + H2O = sphing-4-enine + acetate. It catalyses the reaction N-(hexanoyl)sphing-4-enine + H2O = hexanoate + sphing-4-enine. The catalysed reaction is N-octanoylsphing-4-enine + H2O = octanoate + sphing-4-enine. The enzyme catalyses N-(9Z-octadecenoyl)-sphing-4-enine + H2O = sphing-4-enine + (9Z)-octadecenoate. It carries out the reaction N-dodecanoylethanolamine + H2O = dodecanoate + ethanolamine. It participates in lipid metabolism; sphingolipid metabolism. In terms of biological role, lysosomal ceramidase that hydrolyzes sphingolipid ceramides into sphingosine and free fatty acids at acidic pH. Ceramides, sphingosine, and its phosphorylated form sphingosine-1-phosphate are bioactive lipids that mediate cellular signaling pathways regulating several biological processes including cell proliferation, apoptosis and differentiation. Has a higher catalytic efficiency towards C12-ceramides versus other ceramides. Also catalyzes the reverse reaction allowing the synthesis of ceramides from fatty acids and sphingosine. For the reverse synthetic reaction, the natural sphingosine D-erythro isomer is more efficiently utilized as a substrate compared to D-erythro-dihydrosphingosine and D-erythro-phytosphingosine, while the fatty acids with chain lengths of 12 or 14 carbons are the most efficiently used. Also has an N-acylethanolamine hydrolase activity. By regulating the levels of ceramides, sphingosine and sphingosine-1-phosphate in the epidermis, mediates the calcium-induced differentiation of epidermal keratinocytes. Also indirectly regulates tumor necrosis factor/TNF-induced apoptosis. By regulating the intracellular balance between ceramides and sphingosine, in adrenocortical cells, probably also acts as a regulator of steroidogenesis. This Bos taurus (Bovine) protein is Acid ceramidase.